A 146-amino-acid polypeptide reads, in one-letter code: UPF0260 protein Swit_2819 (146 aa).

It belongs to the UPF0260 family.

In Rhizorhabdus wittichii (strain DSM 6014 / CCUG 31198 / JCM 15750 / NBRC 105917 / EY 4224 / RW1) (Sphingomonas wittichii), this protein is UPF0260 protein Swit_2819.